The chain runs to 316 residues: D-alanine--D-alanine ligase (316 aa).

Residues 129 to 316 (KYILQAAGIP…ALQAEFCRYP (188 aa)) enclose the ATP-grasp domain. Position 162-217 (162-217 (EGSLLYPMFIKPANMGSSVGITKAENREELQNALQEAYRYDTRAIVEQGIEAREIE)) interacts with ATP. Residues Asp288, Glu301, and Asn303 each contribute to the Mg(2+) site.

It belongs to the D-alanine--D-alanine ligase family. Mg(2+) serves as cofactor. Requires Mn(2+) as cofactor.

The protein resides in the cytoplasm. It carries out the reaction 2 D-alanine + ATP = D-alanyl-D-alanine + ADP + phosphate + H(+). Its pathway is cell wall biogenesis; peptidoglycan biosynthesis. Cell wall formation. The sequence is that of D-alanine--D-alanine ligase (ddl) from Enterococcus gallinarum.